Reading from the N-terminus, the 496-residue chain is MPSISTDFDVRPYEDVPAQTIALSVPDAAAPKHCPIQLLFWPVDGKSSFTRGYENLKEGLSRLLSDVPVLAGKLERGWKGDSRYLAVNISSDASVEFVYEDVSAEDIIPSYDNLAQNGFPTTGFRDILSPKMSLGPMVEGSPMMCAKLNMIKGGAILAYGFSHVLADGWANSELGRLWALHAAQVSQGIEFKKHKDATPDEDIRRRLSTLPEYDTDVPLDAFLQITPSEEATNFLHKDVLSAEKAKKKAREKMMATLLAAGEVPELPRFTFWRFTPEKLKELKQAAAGSDPDKWISTMDALAGLFWSRIALIQGQSSNGHQQSRCIFALDIRRRLQPPVPLGYIGNVFSPVDALCPLDELESDSLGLKAAAQSMRQANKGWAQSRWEAWLNKIMSLPLDQTLDTSQEFRLQKHNMYFNDYSAFQLNTASWGAPFGQPTRTRCLRSGLSGGAAGVWVCPKLPDGSLEVWLTSTAALQKSLFEDTMFNHYAEFVCQHT.

Histidine 163 (proton acceptor) is an active-site residue.

The protein belongs to the plant acyltransferase family. As to quaternary structure, monomer.

It participates in secondary metabolite biosynthesis. Its function is as follows. Acyltransferase; part of the gene cluster that mediates the biosynthesis of squalestatin S1 (SQS1, also known as zaragozic acid A), a heavily oxidized fungal polyketide that offers potent cholesterol lowering activity by targeting squalene synthase (SS). SQS1 is composed of a 2,8-dioxobicyclic[3.2.1]octane-3,4,5-tricarboxyclic acid core that is connected to two lipophilic polyketide arms. These initial steps feature the priming of an unusual benzoic acid starter unit onto the highly reducing polyketide synthase clz14, followed by oxaloacetate extension and product release to generate a tricarboxylic acid containing product. The phenylalanine ammonia lyase (PAL) clz10 and the acyl-CoA ligase clz12 are involved in transforming phenylalanine into benzoyl-CoA. The citrate synthase-like protein clz17 is involved in connecting the C-alpha-carbons of the hexaketide chain and oxaloacetate to afford the tricarboxylic acid unit. The potential hydrolytic enzymes, clz11 and clz13, are in close proximity to pks2 and may participate in product release. On the other side, the tetraketide arm is synthesized by a the squalestatin tetraketide synthase clz2 and enzymatically esterified to the core in the last biosynthetic step, by the acetyltransferase clz6. The biosynthesis of the tetraketide must involve 3 rounds of chain extension. After the first and second rounds methyl-transfer occurs, and in all rounds of extension the ketoreductase and dehydratase are active. The enoyl reductase and C-MeT of clz2 are not active in the final round of extension. The acetyltransferase clz6 appears to have a broad substrate selectivity for its acyl CoA substrate, allowing the in vitro synthesis of novel squalestatins. The biosynthesis of SQS1 requires several oxidative steps likely performed by oxidoreductases clz3, clz15 and clz16. Finally, in support of the identification of the cluster as being responsible for SQS1 production, the cluster contains a gene encoding a putative squalene synthase (SS) clz20, suggesting a likely mechanism for self-resistance. This chain is Acyltransferase clz6, found in Cochliobolus lunatus (Filamentous fungus).